Reading from the N-terminus, the 260-residue chain is Indole-3-glycerol phosphate synthase (260 aa).

The protein belongs to the TrpC family.

It catalyses the reaction 1-(2-carboxyphenylamino)-1-deoxy-D-ribulose 5-phosphate + H(+) = (1S,2R)-1-C-(indol-3-yl)glycerol 3-phosphate + CO2 + H2O. The protein operates within amino-acid biosynthesis; L-tryptophan biosynthesis; L-tryptophan from chorismate: step 4/5. This is Indole-3-glycerol phosphate synthase from Staphylococcus haemolyticus (strain JCSC1435).